The primary structure comprises 185 residues: Ribosome-recycling factor (185 aa).

The protein belongs to the RRF family.

The protein resides in the cytoplasm. Responsible for the release of ribosomes from messenger RNA at the termination of protein biosynthesis. May increase the efficiency of translation by recycling ribosomes from one round of translation to another. In Pseudomonas paraeruginosa (strain DSM 24068 / PA7) (Pseudomonas aeruginosa (strain PA7)), this protein is Ribosome-recycling factor.